Consider the following 407-residue polypeptide: Peptidase T (407 aa).

H82 provides a ligand contact to Zn(2+). D84 is a catalytic residue. A Zn(2+)-binding site is contributed by D143. E177 acts as the Proton acceptor in catalysis. 3 residues coordinate Zn(2+): E178, D200, and H382.

It belongs to the peptidase M20B family. Zn(2+) is required as a cofactor.

The protein resides in the cytoplasm. The enzyme catalyses Release of the N-terminal residue from a tripeptide.. Cleaves the N-terminal amino acid of tripeptides. This chain is Peptidase T, found in Streptococcus equi subsp. equi (strain 4047).